The following is a 487-amino-acid chain: Sorting nexin-4 (487 aa).

Residues 1 to 59 (MDHDDFDSVSWRHGPDSDISRPTTSGTDTAESPETRRDPNGKRRMSSASEIPQAGPHAD) form a disordered region. Polar residues predominate over residues 20-32 (SRPTTSGTDTAES). A PX domain is found at 70–192 (VLECRVDTPI…IFLESPDWNA (123 aa)). Residues Arg-113, Thr-115, Lys-139, and Arg-158 each contribute to the a 1,2-diacyl-sn-glycero-3-phospho-(1D-myo-inositol-3-phosphate) site. Residues 395-430 (EQSRRERMRKLELRIDELTREVESAKTTSEMFDEEV) adopt a coiled-coil conformation.

Belongs to the sorting nexin family.

It is found in the cytoplasm. The protein localises to the cytosol. It localises to the preautophagosomal structure membrane. Its subcellular location is the endosome membrane. Sorting nexin, involved in the separation or division of vacuoles throughout the entire life cycle of the cells. Involved in retrieval of late-Golgi SNAREs from post-Golgi endosomes to the trans-Golgi network, for cytoplasm to vacuole transport (Cvt), and autophagy of large cargos including mitophagy, pexophagy and glycophagy. The protein is Sorting nexin-4 (snx4) of Emericella nidulans (strain FGSC A4 / ATCC 38163 / CBS 112.46 / NRRL 194 / M139) (Aspergillus nidulans).